A 213-amino-acid polypeptide reads, in one-letter code: Glycerol-3-phosphate acyltransferase (213 aa).

5 helical membrane-spanning segments follow: residues 3–23, 51–71, 78–98, 115–135, and 140–160; these read ILLA…VVVS, KAAI…VWLA, DVAI…PVFF, AVHP…AFFF, and LAAL…FGMP.

The protein belongs to the PlsY family. Probably interacts with PlsX.

The protein localises to the cell inner membrane. The enzyme catalyses an acyl phosphate + sn-glycerol 3-phosphate = a 1-acyl-sn-glycero-3-phosphate + phosphate. It functions in the pathway lipid metabolism; phospholipid metabolism. Catalyzes the transfer of an acyl group from acyl-phosphate (acyl-PO(4)) to glycerol-3-phosphate (G3P) to form lysophosphatidic acid (LPA). This enzyme utilizes acyl-phosphate as fatty acyl donor, but not acyl-CoA or acyl-ACP. The sequence is that of Glycerol-3-phosphate acyltransferase from Burkholderia cenocepacia (strain HI2424).